The sequence spans 270 residues: 3-phenylpropionate-dihydrodiol/cinnamic acid-dihydrodiol dehydrogenase (270 aa).

Residue 10–34 (FITGGGSGLGLALVERFIEEGAQVA) participates in NAD(+) binding. Serine 143 is a binding site for substrate. The active-site Proton acceptor is the tyrosine 156.

Belongs to the short-chain dehydrogenases/reductases (SDR) family.

The enzyme catalyses 3-(cis-5,6-dihydroxycyclohexa-1,3-dien-1-yl)propanoate + NAD(+) = 3-(2,3-dihydroxyphenyl)propanoate + NADH + H(+). It carries out the reaction (2E)-3-(cis-5,6-dihydroxycyclohexa-1,3-dien-1-yl)prop-2-enoate + NAD(+) = (2E)-3-(2,3-dihydroxyphenyl)prop-2-enoate + NADH + H(+). Its pathway is aromatic compound metabolism; 3-phenylpropanoate degradation. In terms of biological role, converts 3-phenylpropionate-dihydrodiol (PP-dihydrodiol) and cinnamic acid-dihydrodiol (CI-dihydrodiol) into 3-(2,3-dihydroxylphenyl)propanoic acid (DHPP) and 2,3-dihydroxicinnamic acid (DHCI), respectively. The sequence is that of 3-phenylpropionate-dihydrodiol/cinnamic acid-dihydrodiol dehydrogenase from Escherichia coli (strain K12 / MC4100 / BW2952).